Here is a 426-residue protein sequence, read N- to C-terminus: Alpha-ionylideneethane synthase abl3 (426 aa).

This sequence belongs to the alpha-ionylideneethane synthase family.

Its pathway is hormone biosynthesis. Alpha-ionylideneethane synthase; part of the gene cluster that mediates the biosynthesis of abscisic acid (ABA), a phytohormone that acts antagonistically toward salicylic acid (SA), jasmonic acid (JA) and ethylene (ETH) signaling, to impede plant defense responses. The first step of the pathway catalyzes the reaction from farnesyl diphosphate to alpha-ionylideneethane performed by the alpha-ionylideneethane synthase abl3 via a three-step reaction mechanism involving 2 neutral intermediates, beta-farnesene and allofarnesene. The cytochrome P450 monooxygenase abl1 might then be involved in the conversion of alpha-ionylideneethane to alpha-ionylideneacetic acid. Alpha-ionylideneacetic acid is further converted to abscisic acid in 2 steps involving the cytochrome P450 monooxygenase abl2 and the short-chain dehydrogenase/reductase abl4, via the intermediates 1'-deoxy-ABA or 1',4'-trans-diol-ABA, depending on the order of action of these 2 enzymes. Abl2 is responsible for the hydroxylation of carbon atom C-1' and abl4 might be involved in the oxidation of the C-4' carbon atom. This is Alpha-ionylideneethane synthase abl3 from Leptosphaeria maculans (strain JN3 / isolate v23.1.3 / race Av1-4-5-6-7-8) (Blackleg fungus).